Here is a 500-residue protein sequence, read N- to C-terminus: NAD(P)H-quinone oxidoreductase chain 4, chloroplastic (500 aa).

12 helical membrane-spanning segments follow: residues 4–24, 37–57, 80–100, 134–154, 167–187, 208–228, 242–262, 272–292, 330–350, 386–406, 416–436, and 462–482; these read FPWLTAILLLPISAGSSILFI, ICICLLELLLMTYVFYYNFQL, LGIDGLSIGPILLTGFITTLA, LLLFFIMWELELIPVYLLLSM, FILYTAGGSIFLLIGVLGMGL, GLEILFYFGFLIAYAAKPPII, HYSTCMLLAGILLKMGAYGLV, AHSLFSPWLVIVGTLQIIYAA, GAILQIISHGFIGAALFFLAG, LASPGMSGFVAEFLVFLGIIT, ILITVVMAIGMILTPIYLLSM, and IFILISILLPVMGIGIYPDFV.

Belongs to the complex I subunit 4 family.

It localises to the plastid. Its subcellular location is the chloroplast thylakoid membrane. It carries out the reaction a plastoquinone + NADH + (n+1) H(+)(in) = a plastoquinol + NAD(+) + n H(+)(out). It catalyses the reaction a plastoquinone + NADPH + (n+1) H(+)(in) = a plastoquinol + NADP(+) + n H(+)(out). This chain is NAD(P)H-quinone oxidoreductase chain 4, chloroplastic, found in Amborella trichopoda.